The chain runs to 1806 residues: Collagen alpha-1(XI) chain (1806 aa).

An N-terminal signal peptide occupies residues Met1–Gly35. The propeptide at Ala36–Ala511 is N-terminal propeptide. Cystine bridges form between Cys61–Cys243 and Cys182–Cys236. A Laminin G-like domain is found at Asp71–Cys243. The segment at Lys230 to His419 is nonhelical region. The segment at Gly420 to Thr508 is triple-helical region (interrupted). The interval Leu439–Thr508 is disordered. Residues Gly442–Gly490 form the Collagen-like 1 domain. 2 stretches are compositionally biased toward low complexity: residues Pro449–Pro461 and Leu479–Pro496. The tract at residues Ile509–Ala511 is short nonhelical segment. Residues Gln512 to Arg528 form a telopeptide region. A disordered region spans residues Arg528 to Ala1563. The interval Gly529 to Val1542 is triple-helical region. Collagen-like domains are found at residues Gly532–Gly586, Gly583–Pro641, Gly616–Pro674, and Gly643–Gln699. Composition is skewed to gly residues over residues Gly541–Gly550 and Gly583–Gly592. Lys612 carries the post-translational modification Allysine. The span at Pro641 to Ala662 shows a compositional bias: low complexity. Positions Gln699–Pro710 are enriched in pro residues. Residues Gln717–Ala728 are compositionally biased toward low complexity. The span at Arg807–Lys816 shows a compositional bias: basic and acidic residues. Low complexity-rich tracts occupy residues Lys875–Lys903, Arg918–Val927, Lys941–Thr960, Pro971–Ile981, Arg1032–Pro1041, and Ser1058–Pro1074. Residues Arg1076–Pro1085 show a composition bias toward pro residues. The span at Ala1086–Val1110 shows a compositional bias: low complexity. Residues Gly1162–Gly1171 show a composition bias toward gly residues. Pro residues-rich tracts occupy residues Met1218–Pro1229 and Gln1343–Arg1362. Low complexity-rich tracts occupy residues Ala1385–Pro1394 and Gln1419–Asp1428. Collagen-like domains follow at residues Gly1393–Gly1450, Gly1429–Asp1487, and Gly1483–Glu1541. The span at Pro1430–Leu1439 shows a compositional bias: pro residues. An Allysine modification is found at Lys1452. The span at Pro1455 to Pro1464 shows a compositional bias: low complexity. Over residues Gly1483–Gly1492 the composition is skewed to gly residues. 2 stretches are compositionally biased toward pro residues: residues Pro1493 to Gln1509 and Pro1530 to Pro1539. Residues Ile1543–Ala1563 are nonhelical region (C-terminal). The propeptide at Asp1564–Gly1806 is C-terminal propeptide. In terms of domain architecture, Fibrillar collagen NC1 spans Glu1577 to Leu1805. A disulfide bridge links Cys1607 with Cys1639. Asp1625, Asn1627, Gln1628, Cys1630, and Asp1633 together coordinate Ca(2+). An N-linked (GlcNAc...) asparagine glycan is attached at Asn1640. Disulfide bonds link Cys1648–Cys1803 and Cys1714–Cys1757.

This sequence belongs to the fibrillar collagen family. In terms of assembly, trimers composed of three different chains: alpha 1(XI), alpha 2(XI), and alpha 3(XI). Alpha 3(XI) is a post-translational modification of alpha 1(II). Alpha 1(V) can also be found instead of alpha 3(XI)=1(II). Prolines at the third position of the tripeptide repeating unit (G-X-Y) are hydroxylated in some or all of the chains. In terms of processing, N-glycosylated. As to expression, cartilage, placenta and some tumor or virally transformed cell lines. Isoforms using exon IIA or IIB are found in the cartilage while isoforms using only exon IIB are found in the tendon.

It is found in the secreted. The protein resides in the extracellular space. It localises to the extracellular matrix. May play an important role in fibrillogenesis by controlling lateral growth of collagen II fibrils. This chain is Collagen alpha-1(XI) chain (COL11A1), found in Homo sapiens (Human).